We begin with the raw amino-acid sequence, 193 residues long: Superoxide dismutase [Fe] (193 aa).

Residue H27 participates in Fe cation binding. At K51 the chain carries N6-acetyllysine. Residues H74, D157, and H161 each contribute to the Fe cation site.

It belongs to the iron/manganese superoxide dismutase family. As to quaternary structure, homodimer. It depends on Fe cation as a cofactor.

It catalyses the reaction 2 superoxide + 2 H(+) = H2O2 + O2. In terms of biological role, destroys superoxide anion radicals which are normally produced within the cells and which are toxic to biological systems. This is Superoxide dismutase [Fe] (sodB) from Escherichia coli O157:H7.